A 652-amino-acid polypeptide reads, in one-letter code: DNA ligase (652 aa).

NAD(+) is bound by residues 29–33 (DSDYD), 78–79 (SL), and Glu107. The active-site N6-AMP-lysine intermediate is Lys109. Arg130, Glu164, Lys278, and Lys302 together coordinate NAD(+). The Zn(2+) site is built by Cys395, Cys398, Cys413, and Cys418. The 76-residue stretch at 577–652 (NSDAALFGLT…IEDEDWLRKF (76 aa)) folds into the BRCT domain.

Belongs to the NAD-dependent DNA ligase family. LigA subfamily. Requires Mg(2+) as cofactor. It depends on Mn(2+) as a cofactor.

The catalysed reaction is NAD(+) + (deoxyribonucleotide)n-3'-hydroxyl + 5'-phospho-(deoxyribonucleotide)m = (deoxyribonucleotide)n+m + AMP + beta-nicotinamide D-nucleotide.. Functionally, DNA ligase that catalyzes the formation of phosphodiester linkages between 5'-phosphoryl and 3'-hydroxyl groups in double-stranded DNA using NAD as a coenzyme and as the energy source for the reaction. It is essential for DNA replication and repair of damaged DNA. In Streptococcus pyogenes serotype M6 (strain ATCC BAA-946 / MGAS10394), this protein is DNA ligase.